Here is a 345-residue protein sequence, read N- to C-terminus: Phosphoribosylformylglycinamidine cyclo-ligase (345 aa).

The protein belongs to the AIR synthase family.

It is found in the cytoplasm. It catalyses the reaction 2-formamido-N(1)-(5-O-phospho-beta-D-ribosyl)acetamidine + ATP = 5-amino-1-(5-phospho-beta-D-ribosyl)imidazole + ADP + phosphate + H(+). The protein operates within purine metabolism; IMP biosynthesis via de novo pathway; 5-amino-1-(5-phospho-D-ribosyl)imidazole from N(2)-formyl-N(1)-(5-phospho-D-ribosyl)glycinamide: step 2/2. The sequence is that of Phosphoribosylformylglycinamidine cyclo-ligase from Limosilactobacillus fermentum (strain NBRC 3956 / LMG 18251) (Lactobacillus fermentum).